We begin with the raw amino-acid sequence, 184 residues long: Peptide deformylase (184 aa).

Residues cysteine 111 and histidine 154 each coordinate Fe cation. Glutamate 155 is an active-site residue. A Fe cation-binding site is contributed by histidine 158.

The protein belongs to the polypeptide deformylase family. The cofactor is Fe(2+).

It carries out the reaction N-terminal N-formyl-L-methionyl-[peptide] + H2O = N-terminal L-methionyl-[peptide] + formate. Functionally, removes the formyl group from the N-terminal Met of newly synthesized proteins. Requires at least a dipeptide for an efficient rate of reaction. N-terminal L-methionine is a prerequisite for activity but the enzyme has broad specificity at other positions. This is Peptide deformylase from Lactobacillus gasseri (strain ATCC 33323 / DSM 20243 / BCRC 14619 / CIP 102991 / JCM 1131 / KCTC 3163 / NCIMB 11718 / NCTC 13722 / AM63).